The sequence spans 432 residues: 5-methylthioadenosine/S-adenosylhomocysteine deaminase (432 aa).

Residues histidine 62 and histidine 64 each contribute to the Zn(2+) site. Substrate contacts are provided by glutamate 91 and histidine 184. Histidine 211 is a binding site for Zn(2+). Glutamate 214 and aspartate 299 together coordinate substrate. Aspartate 299 serves as a coordination point for Zn(2+).

Belongs to the metallo-dependent hydrolases superfamily. MTA/SAH deaminase family. Zn(2+) is required as a cofactor.

It catalyses the reaction S-adenosyl-L-homocysteine + H2O + H(+) = S-inosyl-L-homocysteine + NH4(+). The catalysed reaction is S-methyl-5'-thioadenosine + H2O + H(+) = S-methyl-5'-thioinosine + NH4(+). Catalyzes the deamination of 5-methylthioadenosine and S-adenosyl-L-homocysteine into 5-methylthioinosine and S-inosyl-L-homocysteine, respectively. Is also able to deaminate adenosine. The sequence is that of 5-methylthioadenosine/S-adenosylhomocysteine deaminase from Haloarcula marismortui (strain ATCC 43049 / DSM 3752 / JCM 8966 / VKM B-1809) (Halobacterium marismortui).